The primary structure comprises 345 residues: MKVAIIGATGYGGIELIRLLEQHPYFSIASLHSFSQVGECITNVYPHFQNVLVHTLQEIDAEEIVKEAEIVFLATPAGVSAELTPKLLAVGLKVIDLSGDFRMKDPFIYEQWYKRAAAKEEILSKAVYGLSEWKRSEVQNANLIANPGCFATAALLATLPLVRSGIIEEDSIIIDAKSGVSGAGKTPTTMTHFPELYDNLRIYKVNEHQHVPEIEQMLAEWNRETKPITFSTHLIPISRGIMVTLYAKVKREMEIEQLQKLYEETYEQSAFVRIRTQGEFPSPKEVRGSNYCDMGIAYDERTGRVTVVSVIDNMMKGAAGQAIQNANIIAGLEETTGLQHMPLYL.

The active site involves C149.

It belongs to the NAGSA dehydrogenase family. Type 1 subfamily.

It is found in the cytoplasm. The enzyme catalyses N-acetyl-L-glutamate 5-semialdehyde + phosphate + NADP(+) = N-acetyl-L-glutamyl 5-phosphate + NADPH + H(+). It functions in the pathway amino-acid biosynthesis; L-arginine biosynthesis; N(2)-acetyl-L-ornithine from L-glutamate: step 3/4. Its function is as follows. Catalyzes the NADPH-dependent reduction of N-acetyl-5-glutamyl phosphate to yield N-acetyl-L-glutamate 5-semialdehyde. This is N-acetyl-gamma-glutamyl-phosphate reductase from Bacillus cereus (strain ATCC 10987 / NRS 248).